The following is a 202-amino-acid chain: Guanylate kinase (202 aa).

Residues 18 to 200 (LKPVVVFGPS…AYKQLEAICL (183 aa)) enclose the Guanylate kinase-like domain. 25 to 32 (GPSGVGKS) provides a ligand contact to ATP.

Belongs to the guanylate kinase family.

The enzyme catalyses GMP + ATP = GDP + ADP. Essential for recycling GMP and indirectly, cGMP. In Schizosaccharomyces pombe (strain 972 / ATCC 24843) (Fission yeast), this protein is Guanylate kinase.